A 1122-amino-acid polypeptide reads, in one-letter code: Breast carcinoma-amplified sequence 3 homolog (1122 aa).

The tract at residues M1 to A41 is disordered. The segment covering V14–K37 has biased composition (gly residues). Position 55 is a phosphoserine (S55). 4 stretches are compositionally biased toward low complexity: residues G357–G377, G626–D641, T966–N987, and L1036–L1051. Disordered stretches follow at residues G357–Q382, G620–G644, T966–Q990, N1033–G1054, and G1071–L1122. S638 carries the post-translational modification Phosphoserine. Residues V1087–R1112 are compositionally biased toward acidic residues. Basic and acidic residues predominate over residues E1113–L1122.

This sequence belongs to the BCAS3 family. In terms of tissue distribution, expressed in all postembryonic pericardial cells, but not in cardioblasts. Also expressed in Garland cells in third instar larvae (at protein level).

Its subcellular location is the cytoplasm. Its function is as follows. Regulates macropinocytosis in pericardial cells. In Drosophila melanogaster (Fruit fly), this protein is Breast carcinoma-amplified sequence 3 homolog (rudhira).